Reading from the N-terminus, the 59-residue chain is Conorfamide-Vc1 (59 aa).

The first 19 residues, M1 to A19, serve as a signal peptide directing secretion. A propeptide spanning residues T20–K25 is cleaved from the precursor. Residues A32–R39 form a positively charged region crucial for activity against MRGPRX1 receptors region. F43 is subject to Phenylalanine amide. Residues R45–L59 constitute a propeptide that is removed on maturation.

It belongs to the FARP (FMRFamide related peptide) family. In terms of tissue distribution, expressed by the venom duct.

It localises to the secreted. Functionally, this peptide activates human and mouse sensory neuron-specific G-protein coupled receptors MRGPRX1. The activity on human receptors has been measured (EC(50)=1.8 uM). Compared with the agonist chloroquine (anti-malaria drug), it is 200-fold more potent. The peptide also causes an increase in cytosolic calcium in a specific subset of DRG neurons, and, in contrast to other Conus venom peptides, the peptide also affects a large fraction of the non-neuronal cells. In vivo, when intracranially injected into mice, it principally renders mice unable to move, and at very low doses, it causes hyperactivity. It also induces itch sensation, since intradermal cheek injection into humanized transgenic mouse (mouse MRGPRX1 replaced by human MRGPRX1) induces scratching. In vivo, when tested at high doses (10 uM) on zebrafish larvae, it induces a range of behavioral effects ranging from an early hypoactivity during the first hour of treatment to an increase in movement during the following hours when the larvae are submitted to strobe light phases. The chain is Conorfamide-Vc1 from Conus victoriae (Queen Victoria cone).